A 198-amino-acid chain; its full sequence is Ribosome maturation factor RimP (198 aa).

The protein belongs to the RimP family.

Its subcellular location is the cytoplasm. In terms of biological role, required for maturation of 30S ribosomal subunits. This Rhizobium rhizogenes (strain K84 / ATCC BAA-868) (Agrobacterium radiobacter) protein is Ribosome maturation factor RimP.